The sequence spans 415 residues: Sensor protein kinase WalK (415 aa).

An HAMP domain is found at 11–63 (RTITKPITDMRNQTVEMSRGNYTQRVKIYGNDEIGELALAFNNLSKRVQEAQA). Positions 68-138 (EKRRLDSVIT…EIQENNDSFL (71 aa)) constitute a PAS domain. 4 residues coordinate Zn(2+): H78, D81, H171, and E175. One can recognise a PAC domain in the interval 121–185 (LEDEFKLEEI…QQQVERERRE (65 aa)). Positions 189–407 (NVSHELRTPL…SIFITLPCEV (219 aa)) constitute a Histidine kinase domain. At H192 the chain carries Phosphohistidine; by autocatalysis.

In terms of assembly, forms homodimers. Forms homooligomers. NH4(+) is required as a cofactor. Post-translationally, autophosphorylated.

It is found in the cell membrane. The catalysed reaction is ATP + protein L-histidine = ADP + protein N-phospho-L-histidine.. Its activity is regulated as follows. By zinc. Zinc-binding negatively regulates WalK kinase activity and thus autophosphorylation. Functionally, member of the two-component regulatory system WalK/WalR that regulates genes involved in cell wall metabolism, virulence regulation, biofilm production, oxidative stress resistance and antibiotic resistance via direct or indirect regulation of autolysins. Functions as a sensor protein kinase which is autophosphorylated at a histidine residue in the dimerization domain and transfers its phosphate group to the conserved aspartic acid residue in the regulatory domain of WalR. In turn, WalR binds to the upstream promoter regions of the target genes to positively and negatively regulate their expression. The sequence is that of Sensor protein kinase WalK (walK) from Staphylococcus aureus.